A 61-amino-acid polypeptide reads, in one-letter code: UPF0434 protein PSPTO_3844 (61 aa).

This sequence belongs to the UPF0434 family.

This Pseudomonas syringae pv. tomato (strain ATCC BAA-871 / DC3000) protein is UPF0434 protein PSPTO_3844.